Here is a 210-residue protein sequence, read N- to C-terminus: Actin-related protein 3C (210 aa).

Positions 1-21 (MFESFNVPGLYIAVQAVLALA) are cleaved as a signal peptide.

The protein belongs to the actin family. As to expression, expressed in kidney, stomach, spleen, bone marrow, uterus, testis, placenta, skeletal muscle, mammary gland, lung, fetal liver, and fetal kidney, but not detected in small intestine, brain, and thymus. Expressed in low-metastatic lung adenocarcinoma cells but not in high-metastatic ones.

Functionally, may play a role in the suppression of metastatic potential in lung adenoma carcinoma cells. The sequence is that of Actin-related protein 3C (ACTR3C) from Homo sapiens (Human).